The following is a 407-amino-acid chain: uncharacterized protein (407 aa).

Positions 1–250 constitute an EAL domain; that stretch reads MLDPLDILTN…LERDVLKQRL (250 aa).

This is an uncharacterized protein from Bacillus subtilis (strain 168).